The primary structure comprises 451 residues: tRNA-2-methylthio-N(6)-dimethylallyladenosine synthase (451 aa).

The MTTase N-terminal domain maps to 3 to 120 (KKLFIQTHGC…LPEMVNAAGK (118 aa)). Positions 12, 49, 83, 156, 160, and 163 each coordinate [4Fe-4S] cluster. The Radical SAM core domain maps to 142–374 (RVEGAEAFVS…QRRISQQAYD (233 aa)). Positions 377–441 (LSMVGEVQRI…PNSLLGELVG (65 aa)) constitute a TRAM domain.

This sequence belongs to the methylthiotransferase family. MiaB subfamily. Monomer. It depends on [4Fe-4S] cluster as a cofactor.

The protein localises to the cytoplasm. The enzyme catalyses N(6)-dimethylallyladenosine(37) in tRNA + (sulfur carrier)-SH + AH2 + 2 S-adenosyl-L-methionine = 2-methylsulfanyl-N(6)-dimethylallyladenosine(37) in tRNA + (sulfur carrier)-H + 5'-deoxyadenosine + L-methionine + A + S-adenosyl-L-homocysteine + 2 H(+). In terms of biological role, catalyzes the methylthiolation of N6-(dimethylallyl)adenosine (i(6)A), leading to the formation of 2-methylthio-N6-(dimethylallyl)adenosine (ms(2)i(6)A) at position 37 in tRNAs that read codons beginning with uridine. This is tRNA-2-methylthio-N(6)-dimethylallyladenosine synthase from Marinomonas sp. (strain MWYL1).